The primary structure comprises 211 residues: MRVRKRKGAQEYLENNPHYVILEPEAAKGRWCEVFGNDHPIHIEVGSGKGAFITGMALKNPEINYIGIDIQLSVLSYALDKVLASQAPNIRLLRVDGSSLTNYFDAGEIDMMYLNFSDPWPKSRHEKRRLTYKSFLDTYKQILPENGEIHFKTDNRGLFEYSLASFSQYGMTLKQVWLDLHASDYPDNVMTEYEARFAKKGQVIYRLEATF.

Residues glutamate 44, aspartate 69, aspartate 96, and aspartate 118 each contribute to the S-adenosyl-L-methionine site. Aspartate 118 is a catalytic residue. Position 122 (lysine 122) interacts with substrate. The segment at 124-129 (RHEKRR) is interaction with RNA. Residues aspartate 154 and 191–194 (TEYE) contribute to the substrate site.

Belongs to the class I-like SAM-binding methyltransferase superfamily. TrmB family.

It catalyses the reaction guanosine(46) in tRNA + S-adenosyl-L-methionine = N(7)-methylguanosine(46) in tRNA + S-adenosyl-L-homocysteine. It participates in tRNA modification; N(7)-methylguanine-tRNA biosynthesis. Catalyzes the formation of N(7)-methylguanine at position 46 (m7G46) in tRNA. The chain is tRNA (guanine-N(7)-)-methyltransferase from Streptococcus equi subsp. zooepidemicus (strain MGCS10565).